The following is a 354-amino-acid chain: MSKYWSNITKDIEPYVCGEQPKNKKIIKLNTNENPYPPSPKVLQAIKNAAKDDLRLYPDPNCDVLRKTIANYYNLSKEEVFIGNGSDEVLSLSFLTFFNPEETIVFSDISYSFYPVYANLYKLDYKLAKLREDFSIDIEDFKNARGGAVITNPNAPTGLYLSLDSIKQILEDNINKVVMVDEAYIDFGGESSVSLIKDYPNLLVIQTLSKSRSLAGMRIGFALGQKELIEGLNRIKNSFNSYTIDRISSLAAIEAIKDEEYFKECTLKVIKTRNWTINELGKIGFKIIPSKANFIFITHDTYEAEDIFIKLRDENVLVRYFNKDRISNYLRVSIGSKEEMEIFIDKIKKIINKL.

N6-(pyridoxal phosphate)lysine is present on lysine 210.

This sequence belongs to the class-II pyridoxal-phosphate-dependent aminotransferase family. Histidinol-phosphate aminotransferase subfamily. Homodimer. Requires pyridoxal 5'-phosphate as cofactor.

The catalysed reaction is L-histidinol phosphate + 2-oxoglutarate = 3-(imidazol-4-yl)-2-oxopropyl phosphate + L-glutamate. The protein operates within amino-acid biosynthesis; L-histidine biosynthesis; L-histidine from 5-phospho-alpha-D-ribose 1-diphosphate: step 7/9. This is Histidinol-phosphate aminotransferase from Clostridium botulinum (strain Langeland / NCTC 10281 / Type F).